We begin with the raw amino-acid sequence, 237 residues long: Lycopene beta-cyclase (237 aa).

The next 7 membrane-spanning stretches (helical) occupy residues 3 to 23, 38 to 58, 80 to 100, 113 to 133, 137 to 157, 170 to 192, and 213 to 233; these read TSYL…LGVV, VGIL…YLIA, EYLF…ALPL, AVLG…LLTV, FYIG…WAVG, AAVL…DGIW, and AFFF…AWVL.

This sequence belongs to the lycopene beta-cyclase family.

The protein localises to the cell membrane. The catalysed reaction is a carotenoid psi-end group = a carotenoid beta-end derivative. It carries out the reaction all-trans-lycopene = gamma-carotene. It catalyses the reaction gamma-carotene = all-trans-beta-carotene. It functions in the pathway carotenoid biosynthesis; beta-carotene biosynthesis. Its function is as follows. Catalyzes the cyclization of both ends of lycopene to form beta-carotene, a retinal precursor. Is required for bacteriorhodopsin biogenesis, a light-driven proton pump with a covalently bound retinal cofactor. The sequence is that of Lycopene beta-cyclase from Halobacterium salinarum (strain ATCC 29341 / DSM 671 / R1).